The primary structure comprises 299 residues: uncharacterized protein (299 aa).

The 59-residue stretch at 1–59 (MDKIHAMQLFIKVAELESFSRAADFFALPKGSVSRQIQALEHQLGTQLLQRTTRRVKLT) folds into the HTH lysR-type domain. A DNA-binding region (H-T-H motif) is located at residues 19–38 (FSRAADFFALPKGSVSRQIQ).

This sequence belongs to the LysR transcriptional regulatory family.

This is an uncharacterized protein from Escherichia coli (strain K12).